A 544-amino-acid polypeptide reads, in one-letter code: CTP synthase (544 aa).

The amidoligase domain stretch occupies residues 1-265 (MTKFIFVTGG…DNIITEQLQL (265 aa)). CTP is bound at residue serine 13. Position 13 (serine 13) interacts with UTP. ATP-binding positions include 14-19 (SLGKGI) and aspartate 71. Positions 71 and 139 each coordinate Mg(2+). CTP is bound by residues 146 to 148 (DIE), 186 to 191 (KTKPTQ), and lysine 222. Residues 186-191 (KTKPTQ) and lysine 222 each bind UTP. The 255-residue stretch at 290 to 544 (KIAMVGKYVD…VKAALNNKKA (255 aa)) folds into the Glutamine amidotransferase type-1 domain. Glycine 353 lines the L-glutamine pocket. Residue cysteine 380 is the Nucleophile; for glutamine hydrolysis of the active site. L-glutamine-binding positions include 381–384 (LGMQ), glutamate 404, and arginine 471. Residues histidine 517 and glutamate 519 contribute to the active site.

The protein belongs to the CTP synthase family. In terms of assembly, homotetramer.

It carries out the reaction UTP + L-glutamine + ATP + H2O = CTP + L-glutamate + ADP + phosphate + 2 H(+). The catalysed reaction is L-glutamine + H2O = L-glutamate + NH4(+). It catalyses the reaction UTP + NH4(+) + ATP = CTP + ADP + phosphate + 2 H(+). It functions in the pathway pyrimidine metabolism; CTP biosynthesis via de novo pathway; CTP from UDP: step 2/2. With respect to regulation, allosterically activated by GTP, when glutamine is the substrate; GTP has no effect on the reaction when ammonia is the substrate. The allosteric effector GTP functions by stabilizing the protein conformation that binds the tetrahedral intermediate(s) formed during glutamine hydrolysis. Inhibited by the product CTP, via allosteric rather than competitive inhibition. Its function is as follows. Catalyzes the ATP-dependent amination of UTP to CTP with either L-glutamine or ammonia as the source of nitrogen. Regulates intracellular CTP levels through interactions with the four ribonucleotide triphosphates. This chain is CTP synthase, found in Neisseria meningitidis serogroup C (strain 053442).